The primary structure comprises 308 residues: Probable manganese-dependent inorganic pyrophosphatase (308 aa).

His-9, Asp-13, Asp-15, Asp-75, His-97, and Asp-149 together coordinate Mn(2+).

Belongs to the PPase class C family. It depends on Mn(2+) as a cofactor.

Its subcellular location is the cytoplasm. It catalyses the reaction diphosphate + H2O = 2 phosphate + H(+). The sequence is that of Probable manganese-dependent inorganic pyrophosphatase from Listeria welshimeri serovar 6b (strain ATCC 35897 / DSM 20650 / CCUG 15529 / CIP 8149 / NCTC 11857 / SLCC 5334 / V8).